A 330-amino-acid polypeptide reads, in one-letter code: MNPALPEDVKNLLTDLETFILDVLKGETLSKKAKEKKEVLIKRLKDIKHSYPQDFQDKAETDDQEENDGFSLPPDAVSIASDRDKDEELPYDGSFYPSVAAQDLDYLRAGYLEKRRKDHSFFASEWQKRWCVLTNSMFYYYGSDKDKQQKGAFSLDGYRAKMNDTLRKDAKKDCCFEILAPDKRVYQFAASSPKEAEEWINVIMNARGNIPSEDEELYDDVNQEMDASHEEDIYEELPEESEKPVTGSETPKATPVPVNNTSGKENTDYANFYRGLWDCNGDHPDELSFKYGDTIYILSKEYNTYGWWVGEMKGTIGLVPKAYIIEMYDI.

The tract at residues 53–77 is disordered; that stretch reads QDFQDKAETDDQEENDGFSLPPDAV. The 104-residue stretch at 105–208 folds into the PH domain; the sequence is DYLRAGYLEK…WINVIMNARG (104 aa). Positions 228-261 are disordered; it reads SHEEDIYEELPEESEKPVTGSETPKATPVPVNNT. Positions 247–261 are enriched in polar residues; it reads GSETPKATPVPVNNT. Residues 268–329 enclose the SH3 domain; that stretch reads DYANFYRGLW…PKAYIIEMYD (62 aa).

Belongs to the SKAP family. Phosphorylated on tyrosines.

It is found in the cytoplasm. Its function is as follows. May be involved in B-cell and macrophage adhesion processes. May play a role in src signaling pathway. The chain is Src kinase-associated phosphoprotein 2-A (skap2-a) from Xenopus laevis (African clawed frog).